The sequence spans 274 residues: Bis(5'-nucleosyl)-tetraphosphatase, symmetrical (274 aa).

This sequence belongs to the Ap4A hydrolase family.

It carries out the reaction P(1),P(4)-bis(5'-adenosyl) tetraphosphate + H2O = 2 ADP + 2 H(+). Functionally, hydrolyzes diadenosine 5',5'''-P1,P4-tetraphosphate to yield ADP. This Shewanella sp. (strain MR-4) protein is Bis(5'-nucleosyl)-tetraphosphatase, symmetrical.